Reading from the N-terminus, the 337-residue chain is D-alanine--D-alanine ligase (337 aa).

The 207-residue stretch at 124-330 (KMWFSALGIP…FTEYLSLVIN (207 aa)) folds into the ATP-grasp domain. Residue 154–209 (ALANWGSIFIKAASQGSSVGCYKVDDSSKVAQVLKDAFGYAPYVVVEKTIKARELE) coordinates ATP. Mg(2+) contacts are provided by Asp284, Glu297, and Asn299.

It belongs to the D-alanine--D-alanine ligase family. Requires Mg(2+) as cofactor. The cofactor is Mn(2+).

Its subcellular location is the cytoplasm. The enzyme catalyses 2 D-alanine + ATP = D-alanyl-D-alanine + ADP + phosphate + H(+). The protein operates within cell wall biogenesis; peptidoglycan biosynthesis. In terms of biological role, cell wall formation. The protein is D-alanine--D-alanine ligase of Shewanella putrefaciens (strain CN-32 / ATCC BAA-453).